A 554-amino-acid chain; its full sequence is Solute carrier family 22 member 22 (554 aa).

The Cytoplasmic portion of the chain corresponds to 1-15; the sequence is MDFDEILHHVGDSGR. Residues 16 to 36 traverse the membrane as a helical segment; that stretch reads FQICMIILLNILSLVLSPHDV. The Extracellular portion of the chain corresponds to 37-144; the sequence is LENFTAAIPA…DLVCDFQSFK (108 aa). N-linked (GlcNAc...) asparagine glycosylation is present at asparagine 39. A helical transmembrane segment spans residues 145–165; the sequence is YYAQATSLAGHLVSCPLSGII. The Cytoplasmic portion of the chain corresponds to 166–172; it reads SDRFGRK. The chain crosses the membrane as a helical span at residues 173–193; it reads PLLMYCSLAYGAVGTYCAFAP. Residue asparagine 194 is glycosylated (N-linked (GlcNAc...) asparagine). Residues 194-199 are Extracellular-facing; sequence NFSVYC. A helical membrane pass occupies residues 200–220; that stretch reads VLRFLLSAFQSTILINSLILV. Residues 221 to 231 lie on the Cytoplasmic side of the membrane; sequence LEEASVQWHPT. Residues 232–252 traverse the membrane as a helical segment; sequence IIVLSGLFNSIGQGVLGGLAY. The Extracellular portion of the chain corresponds to 253–258; the sequence is VISDWH. Residues 259-279 traverse the membrane as a helical segment; sequence LLQLAYALPFFIFFVLFCWVP. Over 280 to 347 the chain is Cytoplasmic; sequence ESVRWLIITG…DIFINPLIRK (68 aa). Residues 348–368 form a helical membrane-spanning segment; that stretch reads IVLSNSSLLFAELFSFVGLLL. Topologically, residues 369–376 are extracellular; sequence DVQLLGKN. The helical transmembrane segment at 377–397 threads the bilayer; sequence MFLTQIFLGAIDVPSKSLTYF. At 398-405 the chain is on the cytoplasmic side; sequence TIRNVSRR. Residues 406–426 traverse the membrane as a helical segment; the sequence is PLIAFLLLTTGSCITITIFIS. The Extracellular portion of the chain corresponds to 427 to 434; the sequence is EEMYVLRT. A helical membrane pass occupies residues 435-455; that stretch reads IIFILGKGCFAAFTCISTTYI. Topologically, residues 456–466 are cytoplasmic; it reads NELSPVELRST. The chain crosses the membrane as a helical span at residues 467–487; that stretch reads LNGVFLAVVRLAGVLSALTLA. The Extracellular portion of the chain corresponds to 488–491; the sequence is TRKY. Residues 492-512 traverse the membrane as a helical segment; that stretch reads FVYLPMILYGVLPIVATISIL. The Cytoplasmic portion of the chain corresponds to 513 to 554; it reads FLPETFNLPHTDIIKDMEKRKRLMSKNISKKEGQDFLETTEC.

Belongs to the major facilitator (TC 2.A.1) superfamily. Organic cation transporter (TC 2.A.1.19) family. In terms of tissue distribution, specifically expressed in kidney where it is found in proximal convoluted tubules (at protein level). Colocalizes with the prostaglandin-inactivating enzyme HPGD in kidney (at protein level). Not detected in other tissues tested.

Its subcellular location is the basolateral cell membrane. Functionally, sodium-independent organic anion transporter which exhibits high specificity for a subset of prostaglandins including prostaglandin E2 (PGE2), prostaglandin E1 (PGE1), prostaglandin F2-alpha (PGF2-alpha) and prostaglandin D2 (PGD2). The sequence is that of Solute carrier family 22 member 22 from Mus musculus (Mouse).